The following is a 352-amino-acid chain: Phenylalanine--tRNA ligase alpha subunit (352 aa).

Glu258 is a Mg(2+) binding site.

The protein belongs to the class-II aminoacyl-tRNA synthetase family. Phe-tRNA synthetase alpha subunit type 1 subfamily. In terms of assembly, tetramer of two alpha and two beta subunits. Mg(2+) serves as cofactor.

The protein resides in the cytoplasm. The enzyme catalyses tRNA(Phe) + L-phenylalanine + ATP = L-phenylalanyl-tRNA(Phe) + AMP + diphosphate + H(+). The chain is Phenylalanine--tRNA ligase alpha subunit from Staphylococcus aureus (strain NCTC 8325 / PS 47).